Consider the following 496-residue polypeptide: MKKYILSLDQGTTSSRAILFNKEGKIVHSAQKEFTQHFPKPGWVEHNAQEIWGSILAVIATCLSEADVKPEQIAGIGITNQRETAVVWDKTTGKPIYNAIVWQSRQTVEICDELKEKGYSEMVREKTGLLIDAYFSGTKVKWILDNVEGAREKAENGELLFGTIDTWLVWKLSGGKAHITDYSNASRTLMFNIHDLQWDDELLDMLTVPKSMLPEVRQSSEIYGETIDYHFFGQNVPIAGVAGDQQAALFGQACFGEGMAKNTYGTGCFMLMNTGEKAVASEHGLLTTIAWGLDGKVNYALEGSIFVAGSAIQWLRDGLRMFKDASESEVYASRVESTEGVYIVPAFVGLGTPYWDSEVRGAMFGVTRGTTKEHFIRATLESLAYQTKDVLCAMEADSGIELNTLRVDGGAVKNNFLMKFQSDILDVPVERPVINETTALGAAYLAGLAVGYWKNQDEIKAQWHMDKRFEPTMEAETSEELYAGWKKAIEATKAFK.

T12 is a binding site for ADP. Residues T12, T13, and S14 each coordinate ATP. T12 provides a ligand contact to sn-glycerol 3-phosphate. Residue R16 participates in ADP binding. The sn-glycerol 3-phosphate site is built by R82, E83, and Y134. Glycerol contacts are provided by R82, E83, and Y134. H230 carries the phosphohistidine; by HPr modification. D244 contacts sn-glycerol 3-phosphate. The glycerol site is built by D244 and Q245. 2 residues coordinate ADP: T266 and G309. The ATP site is built by T266, G309, Q313, and G410. G410 and N414 together coordinate ADP.

This sequence belongs to the FGGY kinase family. Homotetramer and homodimer (in equilibrium). In terms of processing, the phosphoenolpyruvate-dependent sugar phosphotransferase system (PTS), including enzyme I, and histidine-containing protein (HPr) are required for the phosphorylation, which leads to the activation of the enzyme.

It catalyses the reaction glycerol + ATP = sn-glycerol 3-phosphate + ADP + H(+). The protein operates within polyol metabolism; glycerol degradation via glycerol kinase pathway; sn-glycerol 3-phosphate from glycerol: step 1/1. With respect to regulation, activated by phosphorylation and inhibited by fructose 1,6-bisphosphate (FBP). Functionally, key enzyme in the regulation of glycerol uptake and metabolism. Catalyzes the phosphorylation of glycerol to yield sn-glycerol 3-phosphate. This chain is Glycerol kinase, found in Bacillus mycoides (strain KBAB4) (Bacillus weihenstephanensis).